The sequence spans 255 residues: Ornithine decarboxylase antizyme (255 aa).

It belongs to the ODC antizyme family. Interacts with ODC and thereby sterically blocks ODC homodimerization.

Ornithine decarboxylase (ODC) antizyme protein that negatively regulates ODC activity and intracellular polyamine biosynthesis in response to increased intracellular polyamine levels. Binds to ODC monomers, inhibiting the assembly of the functional ODC homodimer, and targets the monomers for ubiquitin-independent proteolytic destruction by the 26S proteasome. The chain is Ornithine decarboxylase antizyme (OAZ1) from Eremothecium gossypii (strain ATCC 10895 / CBS 109.51 / FGSC 9923 / NRRL Y-1056) (Yeast).